The sequence spans 1516 residues: Lysine-specific demethylase 5C (1516 aa).

Positions 14–55 (CPVFEPSWAEFRDPLGYIAKIRPIAEKSGICKIRPPADWQPP) constitute a JmjN domain. The ARID domain occupies 24–128 (FRDPLGYIAK…IVYPYEMYQS (105 aa)). The span at 142–151 (NEEKDKEYKP) shows a compositional bias: basic and acidic residues. The segment at 142 to 186 (NEEKDKEYKPHSIPLRQSVQPSKFNSYGRRAKRLQPDPEPTEEDI) is disordered. Over residues 156 to 166 (LRQSVQPSKFN) the composition is skewed to polar residues. Glycyl lysine isopeptide (Lys-Gly) (interchain with G-Cter in SUMO2) cross-links involve residues Lys-164, Lys-188, Lys-203, and Lys-233. Residues 216-262 (LRKKDKEGPECPPTVVVKEESGGDVKVESTSPKTFLESKEELSHSPE) form a disordered region. The segment covering 232-242 (VKEESGGDVKV) has biased composition (basic and acidic residues). Ser-246 carries the post-translational modification Phosphoserine. Residue Lys-254 forms a Glycyl lysine isopeptide (Lys-Gly) (interchain with G-Cter in SUMO2) linkage. Phosphoserine is present on residues Ser-260 and Ser-276. A PHD-type 1 zinc finger spans residues 283–333 (SYVCRMCSRGDEDDKLLLCDGCDDNYHIFCLLPPLPEIPKGVWRCPKCVMA). Tyr-399 contacts 2-oxoglutarate. The 167-residue stretch at 427-593 (EYATSGWNLN…AGRQCIEHYR (167 aa)) folds into the JmjC domain. Fe cation contacts are provided by His-473 and Glu-475. Positions 481, 483, and 491 each coordinate 2-oxoglutarate. His-561 is a binding site for Fe cation. Residues 666–718 (CIKCKTTCFLSALACYDCPDGLVCLSHINDLCKCSSSRQYLRYRYTLDELPAM) form a C5HC2 zinc finger. Residues Ser-852 and Ser-856 each carry the phosphoserine modification. Lys-1086 participates in a covalent cross-link: Glycyl lysine isopeptide (Lys-Gly) (interchain with G-Cter in SUMO2). The segment at 1144–1209 (TSICVCGQVP…KFLCPLCMRS (66 aa)) adopts a PHD-type 2 zinc-finger fold. The segment at 1274 to 1305 (LQAEPRPEEPPTYPSTPAFDPLREGSGKDMPK) is disordered. Residues 1294–1304 (PLREGSGKDMP) are compositionally biased toward basic and acidic residues. Position 1318 is a phosphoserine (Ser-1318). A disordered region spans residues 1400–1516 (ERHGSRARGR…CPQQPPQQQL (117 aa)). The segment covering 1404 to 1419 (SRARGRALERRRRRKV) has biased composition (basic residues). Positions 1420–1437 (DRGGEGDDPAREELEPKR) are enriched in basic and acidic residues. Residues 1444–1459 (EAEEAHEEEELEEETG) show a composition bias toward acidic residues. 2 stretches are compositionally biased toward polar residues: residues 1471–1481 (GSPSTQENQNG) and 1489–1500 (SSGSSVPFSTLT).

Belongs to the JARID1 histone demethylase family. In terms of assembly, part of two distinct complexes, one containing E2F6, and the other containing REST. Interacts with ZMYND8. Requires Fe(2+) as cofactor.

It localises to the nucleus. It catalyses the reaction N(6),N(6),N(6)-trimethyl-L-lysyl(4)-[histone H3] + 3 2-oxoglutarate + 3 O2 = L-lysyl(4)-[histone H3] + 3 formaldehyde + 3 succinate + 3 CO2. Histone demethylase that specifically demethylates 'Lys-4' of histone H3, thereby playing a central role in histone code. Does not demethylate histone H3 'Lys-9', H3 'Lys-27', H3 'Lys-36', H3 'Lys-79' or H4 'Lys-20'. Demethylates trimethylated and dimethylated but not monomethylated H3 'Lys-4'. Participates in transcriptional repression of neuronal genes by recruiting histone deacetylases and REST at neuron-restrictive silencer elements. The chain is Lysine-specific demethylase 5C (KDM5C) from Sus scrofa (Pig).